Consider the following 512-residue polypeptide: 2-isopropylmalate synthase (512 aa).

Positions 5-268 (LIIFDTTLRD…DIGIDTQQIL (264 aa)) constitute a Pyruvate carboxyltransferase domain. Residues D14, H202, H204, and N239 each coordinate Mn(2+). The interval 394-512 (GFVSLSQHSE…SKADRVAAQG (119 aa)) is regulatory domain.

The protein belongs to the alpha-IPM synthase/homocitrate synthase family. LeuA type 1 subfamily. In terms of assembly, homodimer. Mn(2+) is required as a cofactor.

The protein localises to the cytoplasm. It carries out the reaction 3-methyl-2-oxobutanoate + acetyl-CoA + H2O = (2S)-2-isopropylmalate + CoA + H(+). It functions in the pathway amino-acid biosynthesis; L-leucine biosynthesis; L-leucine from 3-methyl-2-oxobutanoate: step 1/4. Catalyzes the condensation of the acetyl group of acetyl-CoA with 3-methyl-2-oxobutanoate (2-ketoisovalerate) to form 3-carboxy-3-hydroxy-4-methylpentanoate (2-isopropylmalate). This is 2-isopropylmalate synthase from Polaromonas naphthalenivorans (strain CJ2).